The chain runs to 358 residues: DNA replication and repair protein RecF (358 aa).

30 to 37 (GNNGSGKT) lines the ATP pocket.

This sequence belongs to the RecF family.

The protein resides in the cytoplasm. In terms of biological role, the RecF protein is involved in DNA metabolism; it is required for DNA replication and normal SOS inducibility. RecF binds preferentially to single-stranded, linear DNA. It also seems to bind ATP. The sequence is that of DNA replication and repair protein RecF from Histophilus somni (strain 129Pt) (Haemophilus somnus).